A 533-amino-acid polypeptide reads, in one-letter code: Phospho-2-dehydro-3-deoxyheptonate aldolase 1, chloroplastic (533 aa).

The N-terminal 57 residues, 1–57, are a transit peptide targeting the chloroplast; it reads MALSTNSTTSSLLPKTPLVQQPLLKNASLPTTTKAIRFIQPISAIHSSDSSKNTPIV. The segment covering 47–56 has biased composition (polar residues); the sequence is SSDSSKNTPI. The interval 47–70 is disordered; the sequence is SSDSSKNTPIVSAKPSSPPAATST. Residues 57–70 show a composition bias toward low complexity; sequence VSAKPSSPPAATST. Cysteine 145 provides a ligand contact to Mn(2+). Residues arginine 184, 343-344, lysine 366, and arginine 397 each bind substrate; that span reads ER. Positions 429, 471, and 501 each coordinate Mn(2+).

The protein belongs to the class-II DAHP synthase family. As to quaternary structure, homodimer. Mn(2+) serves as cofactor. As to expression, mostly expressed in flowers, especially in petal limbs and tubes, and, to a lower extent, in roots, stems, stigmas, anthers, leaves and sepals.

It localises to the plastid. Its subcellular location is the chloroplast. The catalysed reaction is D-erythrose 4-phosphate + phosphoenolpyruvate + H2O = 7-phospho-2-dehydro-3-deoxy-D-arabino-heptonate + phosphate. It participates in metabolic intermediate biosynthesis; chorismate biosynthesis; chorismate from D-erythrose 4-phosphate and phosphoenolpyruvate: step 1/7. Its function is as follows. Involved in the production of volatile organic compounds (VOCs), including floral volatile benzenoids and phenylpropanoids (FVBP), in flowers of fragrant cultivars (e.g. cv. Mitchell and cv. V26), scent attracting pollinators (e.g. the night-active hawkmoth pollinator Manduca sexta). Catalyzes an aldol-like condensation reaction between phosphoenolpyruvate (PEP) and D-erythrose 4-phosphate (E4P) to generate 3-deoxy-D-arabino-heptulosonate 7-phosphate (DAH7P) and inorganic phosphate. This Petunia hybrida (Petunia) protein is Phospho-2-dehydro-3-deoxyheptonate aldolase 1, chloroplastic.